We begin with the raw amino-acid sequence, 182 residues long: Small ribosomal subunit protein uS5 (182 aa).

In terms of domain architecture, S5 DRBM spans 16–79; it reads FVDRLVHINR…ESAKRGMIYV (64 aa).

The protein belongs to the universal ribosomal protein uS5 family. As to quaternary structure, part of the 30S ribosomal subunit. Contacts proteins S4 and S8.

Its function is as follows. With S4 and S12 plays an important role in translational accuracy. Located at the back of the 30S subunit body where it stabilizes the conformation of the head with respect to the body. This is Small ribosomal subunit protein uS5 from Bartonella henselae (strain ATCC 49882 / DSM 28221 / CCUG 30454 / Houston 1) (Rochalimaea henselae).